Consider the following 227-residue polypeptide: PKHD-type hydroxylase Caul_0045 (227 aa).

The Fe2OG dioxygenase domain maps to 78–178 (TILSPLFNRY…RTASFFWIQS (101 aa)). Residues histidine 96, aspartate 98, and histidine 159 each contribute to the Fe cation site. Residue arginine 169 coordinates 2-oxoglutarate.

The cofactor is Fe(2+). It depends on L-ascorbate as a cofactor.

The polypeptide is PKHD-type hydroxylase Caul_0045 (Caulobacter sp. (strain K31)).